The sequence spans 133 residues: Nickel-responsive regulator (133 aa).

Ni(2+) contacts are provided by H76, H87, H89, and C95.

The protein belongs to the transcriptional regulatory CopG/NikR family. Homotetramer. Ni(2+) serves as cofactor.

In terms of biological role, transcriptional repressor of the nikABCDE operon. Is active in the presence of excessive concentrations of intracellular nickel. The chain is Nickel-responsive regulator from Salmonella choleraesuis (strain SC-B67).